The primary structure comprises 359 residues: Serpentine receptor class epsilon-13 (359 aa).

The next 7 membrane-spanning stretches (helical) occupy residues 33 to 53 (YLFV…YYLL), 74 to 94 (AIYL…ILLI), 111 to 131 (ISLF…AFVA), 150 to 170 (WLVG…ALDF), 180 to 200 (VTIF…NFLL), 237 to 257 (LALS…IDNL), and 266 to 286 (LNTV…PFVI).

Belongs to the nematode receptor-like protein sre family.

The protein resides in the membrane. In Caenorhabditis elegans, this protein is Serpentine receptor class epsilon-13 (sre-13).